Reading from the N-terminus, the 423-residue chain is CinA-like protein (423 aa).

Belongs to the CinA family.

In Chlorobium phaeobacteroides (strain DSM 266 / SMG 266 / 2430), this protein is CinA-like protein.